The following is a 72-amino-acid chain: uncharacterized protein (72 aa).

Topologically, residues 1–12 (MSKHKHEWTESV) are cytoplasmic. Residues 13 to 32 (ANSGPASILSYCASSILMTV) traverse the membrane as a helical segment. Over 33 to 46 (TNKFVVNLDNFNMN) the chain is Lumenal. The helical transmembrane segment at 47–69 (FVMLFVQSLVCTVTLCILRIVGV) threads the bilayer. Residues 70–72 (ANF) are Cytoplasmic-facing.

Belongs to the TPT transporter family. SLC35D subfamily.

Its subcellular location is the membrane. This is an uncharacterized protein from Saccharomyces cerevisiae (strain RM11-1a) (Baker's yeast).